The primary structure comprises 387 residues: Paralemmin-1 (387 aa).

Position 1 is an N-acetylmethionine (M1). The stretch at 7–104 (ETISQQERLQ…IEELENADTL (98 aa)) forms a coiled coil. Disordered stretches follow at residues 22–78 (RRRQ…QEDE) and 98–133 (LENA…DRKA). 2 stretches are compositionally biased toward basic and acidic residues: residues 25–41 (QAEV…DRRQ) and 69–78 (DMRKQMQEDE). At S116 the chain carries Phosphoserine. Pro residues predominate over residues 116 to 125 (SPGPVVPAPC). A phosphothreonine mark is found at T142 and T146. A Phosphoserine modification is found at S163. Phosphothreonine is present on T244. S246 carries the post-translational modification Phosphoserine. 2 disordered regions span residues 246–297 (SEAG…QEPP) and 334–378 (AAEP…DMKK). Residues 258–273 (GPSEEVVRTTPSRREI) are compositionally biased toward basic and acidic residues. Positions 286 to 297 (GPPGIQPGQEPP) are enriched in low complexity. Phosphoserine occurs at positions 346 and 369. 2 S-palmitoyl cysteine lipidation sites follow: C381 and C383. Cysteine methyl ester is present on C384. Residue C384 is the site of S-farnesyl cysteine attachment. A propeptide spans 385–387 (SIM) (removed in mature form).

This sequence belongs to the paralemmin family. As to quaternary structure, interacts with dopamine receptor DRD3. Post-translationally, phosphorylated.

It localises to the cell membrane. The protein resides in the cell projection. Its subcellular location is the filopodium membrane. The protein localises to the axon. It is found in the dendrite. It localises to the dendritic spine. The protein resides in the basolateral cell membrane. Its subcellular location is the apicolateral cell membrane. Involved in plasma membrane dynamics and cell process formation. Necessary for axonal and dendritic filopodia induction, for dendritic spine maturation and synapse formation in a palmitoylation-dependent manner. This is Paralemmin-1 (PALM) from Sus scrofa (Pig).